A 225-amino-acid polypeptide reads, in one-letter code: Probable molybdenum cofactor guanylyltransferase (225 aa).

GTP is bound by residues 20 to 22 (LAG), Lys-33, Asp-88, and Asp-117. Position 117 (Asp-117) interacts with Mg(2+).

This sequence belongs to the MobA family. Requires Mg(2+) as cofactor.

It localises to the cytoplasm. The enzyme catalyses Mo-molybdopterin + GTP + H(+) = Mo-molybdopterin guanine dinucleotide + diphosphate. Its function is as follows. Transfers a GMP moiety from GTP to Mo-molybdopterin (Mo-MPT) cofactor (Moco or molybdenum cofactor) to form Mo-molybdopterin guanine dinucleotide (Mo-MGD) cofactor. In Methanosarcina acetivorans (strain ATCC 35395 / DSM 2834 / JCM 12185 / C2A), this protein is Probable molybdenum cofactor guanylyltransferase.